Reading from the N-terminus, the 449-residue chain is MAASPLVRFAPSPTGFLHIGNARPALLNALFARRAGGRFLLRLDDTDRERSTEEFASAVAEDLGWLGITPDLFFRQSERTALYDTAAERLKAAGRLYPCYETPEELDRRRKRQLGRGLPPIYDRAALALSEADRAALEAEGRRPHWRFKLDHRVVAWNDLVRGESHVDCASLSDPVLVRADGSYLYTLPSVVDDAEVGVTDVIRGEDHVTNTGVQVQLFEALGAAIPAFGHHNLLTTADGEGLSKRLGHLSLRSLREAGYEPAAVRSLAVLTGSAEAVRPVASLDELASLVDLAHLSRAPARFDPAELDGMNARLVHEMPLDAVRERLAALGVPAEAADAFWAAVRANLGRVAEAADWWRVVAGPVTPVVSEPDFIARAARLLPEAPFDAGTWKAWTDAVKAETGAKGRALFMPLRLALTGLDHGPDLSALLPLIGRERAARRLAGETA.

A 'HIGH' region motif is present at residues 11-21 (PSPTGFLHIGN). Positions 242–246 (GLSKR) match the 'KMSKS' region motif. Lysine 245 contributes to the ATP binding site.

Belongs to the class-I aminoacyl-tRNA synthetase family. Glutamate--tRNA ligase type 1 subfamily. As to quaternary structure, monomer.

It is found in the cytoplasm. The enzyme catalyses tRNA(Glu) + L-glutamate + ATP = L-glutamyl-tRNA(Glu) + AMP + diphosphate. In terms of biological role, catalyzes the attachment of glutamate to tRNA(Glu) in a two-step reaction: glutamate is first activated by ATP to form Glu-AMP and then transferred to the acceptor end of tRNA(Glu). This chain is Glutamate--tRNA ligase 2, found in Methylorubrum populi (strain ATCC BAA-705 / NCIMB 13946 / BJ001) (Methylobacterium populi).